We begin with the raw amino-acid sequence, 215 residues long: Probable nicotinate-nucleotide adenylyltransferase (215 aa).

Belongs to the NadD family.

It carries out the reaction nicotinate beta-D-ribonucleotide + ATP + H(+) = deamido-NAD(+) + diphosphate. The protein operates within cofactor biosynthesis; NAD(+) biosynthesis; deamido-NAD(+) from nicotinate D-ribonucleotide: step 1/1. Functionally, catalyzes the reversible adenylation of nicotinate mononucleotide (NaMN) to nicotinic acid adenine dinucleotide (NaAD). The chain is Probable nicotinate-nucleotide adenylyltransferase from Shewanella putrefaciens (strain CN-32 / ATCC BAA-453).